The sequence spans 1151 residues: Elicitor of plant defense protein 1 (1151 aa).

Disordered stretches follow at residues 22-130 (YQDP…TLGE), 178-197 (ERIRAEESDSGRLSPLRSIK), and 236-255 (NYNSVIPPPEPLNTDPDMHP). A compositionally biased stretch (acidic residues) spans 39–49 (IIEDGEPEDEW). Residues 64-99 (QNSASRLSKMSLTERFSIQTLDDTDGNTKSNRSSAT) are compositionally biased toward polar residues. A compositionally biased stretch (low complexity) spans 104 to 122 (NPPDFSNGNDDSNGNSQNP). A compositionally biased stretch (basic and acidic residues) spans 178 to 187 (ERIRAEESDS). The region spanning 242–500 (PPPEPLNTDP…NLCTEAFNPL (259 aa)) is the uDENN domain. The 133-residue stretch at 524–656 (EIPGSRTIDI…ARRKLMSLLQ (133 aa)) folds into the cDENN domain. A dDENN domain is found at 658-1019 (AAPHKLRYGV…DREMQPANDA (362 aa)). Polar residues-rich tracts occupy residues 695 to 711 (STPKSTLGKWVSQSSSG) and 744 to 760 (TSKSGKTSPQSSVSPVS). A disordered region spans residues 695–809 (STPKSTLGKW…SSSFGVDKHP (115 aa)). Basic and acidic residues predominate over residues 784–798 (LREKRSGHFGEEKMR). The Phorbol-ester/DAG-type zinc finger occupies 886 to 934 (GHCFNYMPKDNTSMCTICNDLAEGDGVYRCTGCKIVSHGRCLGYCSLIC).

This sequence belongs to the EPD1 elicitor family.

Its subcellular location is the secreted. The protein localises to the host cell. In terms of biological role, acts as an elicitor that triggers cell death and defense responses in the host plants. The sequence is that of Elicitor of plant defense protein 1 from Gibberella zeae (strain ATCC MYA-4620 / CBS 123657 / FGSC 9075 / NRRL 31084 / PH-1) (Wheat head blight fungus).